The following is a 234-amino-acid chain: Leucyl/phenylalanyl-tRNA--protein transferase (234 aa).

The protein belongs to the L/F-transferase family.

Its subcellular location is the cytoplasm. The catalysed reaction is N-terminal L-lysyl-[protein] + L-leucyl-tRNA(Leu) = N-terminal L-leucyl-L-lysyl-[protein] + tRNA(Leu) + H(+). The enzyme catalyses N-terminal L-arginyl-[protein] + L-leucyl-tRNA(Leu) = N-terminal L-leucyl-L-arginyl-[protein] + tRNA(Leu) + H(+). It carries out the reaction L-phenylalanyl-tRNA(Phe) + an N-terminal L-alpha-aminoacyl-[protein] = an N-terminal L-phenylalanyl-L-alpha-aminoacyl-[protein] + tRNA(Phe). Functions in the N-end rule pathway of protein degradation where it conjugates Leu, Phe and, less efficiently, Met from aminoacyl-tRNAs to the N-termini of proteins containing an N-terminal arginine or lysine. The protein is Leucyl/phenylalanyl-tRNA--protein transferase of Escherichia fergusonii (strain ATCC 35469 / DSM 13698 / CCUG 18766 / IAM 14443 / JCM 21226 / LMG 7866 / NBRC 102419 / NCTC 12128 / CDC 0568-73).